We begin with the raw amino-acid sequence, 224 residues long: 7-cyano-7-deazaguanine synthase (224 aa).

Residue 10 to 20 (FSGGQDSTTCL) participates in ATP binding. The Zn(2+) site is built by cysteine 193, cysteine 201, cysteine 204, and cysteine 207.

Belongs to the QueC family. Zn(2+) is required as a cofactor.

It catalyses the reaction 7-carboxy-7-deazaguanine + NH4(+) + ATP = 7-cyano-7-deazaguanine + ADP + phosphate + H2O + H(+). The protein operates within purine metabolism; 7-cyano-7-deazaguanine biosynthesis. Functionally, catalyzes the ATP-dependent conversion of 7-carboxy-7-deazaguanine (CDG) to 7-cyano-7-deazaguanine (preQ(0)). In Neisseria gonorrhoeae (strain ATCC 700825 / FA 1090), this protein is 7-cyano-7-deazaguanine synthase.